Reading from the N-terminus, the 505-residue chain is Lysine--tRNA ligase (505 aa).

Residues Glu415 and Glu422 each coordinate Mg(2+).

This sequence belongs to the class-II aminoacyl-tRNA synthetase family. In terms of assembly, homodimer. Mg(2+) is required as a cofactor.

The protein resides in the cytoplasm. It carries out the reaction tRNA(Lys) + L-lysine + ATP = L-lysyl-tRNA(Lys) + AMP + diphosphate. The protein is Lysine--tRNA ligase of Salmonella paratyphi C (strain RKS4594).